The sequence spans 597 residues: Aspartate--tRNA(Asp/Asn) ligase (597 aa).

Glutamate 175 contributes to the L-aspartate binding site. Residues 199 to 202 (QQYK) form an aspartate region. 2 residues coordinate L-aspartate: arginine 221 and histidine 456. 221–223 (RDE) provides a ligand contact to ATP. ATP is bound at residue glutamate 490. Arginine 497 contributes to the L-aspartate binding site. An ATP-binding site is contributed by 542–545 (GVDR).

Belongs to the class-II aminoacyl-tRNA synthetase family. Type 1 subfamily. Homodimer.

The protein localises to the cytoplasm. It carries out the reaction tRNA(Asx) + L-aspartate + ATP = L-aspartyl-tRNA(Asx) + AMP + diphosphate. Its function is as follows. Aspartyl-tRNA synthetase with relaxed tRNA specificity since it is able to aspartylate not only its cognate tRNA(Asp) but also tRNA(Asn). Reaction proceeds in two steps: L-aspartate is first activated by ATP to form Asp-AMP and then transferred to the acceptor end of tRNA(Asp/Asn). This is Aspartate--tRNA(Asp/Asn) ligase from Beijerinckia indica subsp. indica (strain ATCC 9039 / DSM 1715 / NCIMB 8712).